Reading from the N-terminus, the 347-residue chain is NADH-quinone oxidoreductase subunit H (347 aa).

9 helical membrane passes run 13 to 33 (LLIL…VAYI), 50 to 70 (PNVV…KFVF), 82 to 102 (GVFL…WAVI), 115 to 135 (VGIL…IMAG), 161 to 181 (IGFV…TDIV), 198 to 218 (FLDW…ISAL), 248 to 268 (FLLF…LTTI), 286 to 306 (VPGV…FALV), and 321 to 341 (LGWK…AAFL).

The protein belongs to the complex I subunit 1 family. In terms of assembly, NDH-1 is composed of 14 different subunits. Subunits NuoA, H, J, K, L, M, N constitute the membrane sector of the complex.

It localises to the cell inner membrane. The enzyme catalyses a quinone + NADH + 5 H(+)(in) = a quinol + NAD(+) + 4 H(+)(out). Its function is as follows. NDH-1 shuttles electrons from NADH, via FMN and iron-sulfur (Fe-S) centers, to quinones in the respiratory chain. The immediate electron acceptor for the enzyme in this species is believed to be ubiquinone. Couples the redox reaction to proton translocation (for every two electrons transferred, four hydrogen ions are translocated across the cytoplasmic membrane), and thus conserves the redox energy in a proton gradient. This subunit may bind ubiquinone. This chain is NADH-quinone oxidoreductase subunit H, found in Chelativorans sp. (strain BNC1).